Consider the following 826-residue polypeptide: Elongator complex protein 2 (826 aa).

14 WD repeats span residues 13 to 53 (CCPN…VVTN), 56 to 100 (GHTA…LLKA), 105 to 152 (GHEG…VMCL), 158 to 200 (GNGF…FQKV), 205 to 246 (GHED…TSLE), 281 to 329 (GHEN…GVWL), 339 to 378 (GNTL…PREW), 386 to 425 (GHFD…DQSQ), 436 to 474 (IHGY…VENF), 565 to 609 (GHGY…QVQN), 612 to 651 (FHSL…SPEF), 667 to 706 (VHSR…DDCI), 712 to 753 (PCSS…CLYT), and 777 to 826 (SHTL…KCAL).

Belongs to the WD repeat ELP2 family. As to quaternary structure, component of the elongator complex which consists of ELP1, ELP2, ELP3, ELP4, ELP5 and ELP6. Interacts with STAT3 and JAKs.

It localises to the cytoplasm. It is found in the nucleus. It participates in tRNA modification; 5-methoxycarbonylmethyl-2-thiouridine-tRNA biosynthesis. Component of the elongator complex which is required for multiple tRNA modifications, including mcm5U (5-methoxycarbonylmethyl uridine), mcm5s2U (5-methoxycarbonylmethyl-2-thiouridine), and ncm5U (5-carbamoylmethyl uridine). The elongator complex catalyzes the formation of carboxymethyluridine in the wobble base at position 34 in tRNAs. This is Elongator complex protein 2 (ELP2) from Homo sapiens (Human).